A 2383-amino-acid chain; its full sequence is Reducing polyketide synthase rdc5 (2383 aa).

The 429-residue stretch at 10–438 folds into the Ketosynthase family 3 (KS3) domain; sequence RAPIAIIGMS…GTNAHLVLER (429 aa). Catalysis depends on for beta-ketoacyl synthase activity residues cysteine 186, histidine 321, and histidine 361. The segment at 550-881 is malonyl-CoA:ACP transacylase (MAT) domain; it reads FVFTGQGAQW…GFAAELFRRG (332 aa). The N-terminal hotdog fold stretch occupies residues 930–1066; it reads KSLIGAERPS…GLFSINYEDS (137 aa). The 324-residue stretch at 930 to 1253 folds into the PKS/mFAS DH domain; the sequence is KSLIGAERPS…LAELEVEDAD (324 aa). Residues 932–1250 form a dehydratase (DH) domain region; the sequence is LIGAERPSLD…DFHLAELEVE (319 aa). Catalysis depends on histidine 962, which acts as the Proton acceptor; for dehydratase activity. Residues 1094-1253 are C-terminal hotdog fold; that stretch reads VEVISKQAFY…LAELEVEDAD (160 aa). Catalysis depends on aspartate 1160, which acts as the Proton donor; for dehydratase activity. The segment at 1663 to 1977 is enoyl reductase (ER) domain; that stretch reads GLLNTLHFVS…QGKHVGKMIL (315 aa). The active-site Phosphocysteine intermediate is the cysteine 1776. The interval 2002 to 2182 is ketoreductase (KR) domain; it reads ATYLFIGGLG…VSVNLGIMRD (181 aa). The Carrier domain maps to 2300–2377; sequence AAGPIITKAL…QFAVQIAKKS (78 aa). Serine 2337 is subject to O-(pantetheine 4'-phosphoryl)serine.

It participates in secondary metabolite biosynthesis. Reducing polyketide synthase; part of the gene cluster that mediates the biosynthesis of radicicol, a resorcylic acid lactone (RAL) that irreversibly inhibits the HSP90 molecular chaperone, an important target for cancer chemotherapy. The radicicol cluster encodes only two apparent post-PKS enzymes, a cytochrome P450 monooxygenase (rdc4) and a non-heme halogenase (rdc2) that could introduce the epoxide and the chlorine, respectively. If this cluster includes all the genes required for radicicol biosynthesis, the remaining structural features of radicicol are presumably generated by the PKSs rdc1 and rdc5. The C-2' ketone could arise if the R-PKS rdc5 and NR-PKS rdc1 each carry out four iterations, in contrast to the five iteration-three iteration split for the hypothemycin PKSs. The origin of the cis 5',6' double bond is not known. The radicicol R-PKS rdc5 ER domain may catalyze either double bond isomerization or reduction in the third iteration. This is Reducing polyketide synthase rdc5 from Metacordyceps chlamydosporia (Nematophagous fungus).